The primary structure comprises 107 residues: Pyrimidine/purine nucleoside phosphorylase (107 aa).

This sequence belongs to the nucleoside phosphorylase PpnP family.

It carries out the reaction a purine D-ribonucleoside + phosphate = a purine nucleobase + alpha-D-ribose 1-phosphate. The catalysed reaction is adenosine + phosphate = alpha-D-ribose 1-phosphate + adenine. It catalyses the reaction cytidine + phosphate = cytosine + alpha-D-ribose 1-phosphate. The enzyme catalyses guanosine + phosphate = alpha-D-ribose 1-phosphate + guanine. It carries out the reaction inosine + phosphate = alpha-D-ribose 1-phosphate + hypoxanthine. The catalysed reaction is thymidine + phosphate = 2-deoxy-alpha-D-ribose 1-phosphate + thymine. It catalyses the reaction uridine + phosphate = alpha-D-ribose 1-phosphate + uracil. The enzyme catalyses xanthosine + phosphate = alpha-D-ribose 1-phosphate + xanthine. Its function is as follows. Catalyzes the phosphorolysis of diverse nucleosides, yielding D-ribose 1-phosphate and the respective free bases. Can use uridine, adenosine, guanosine, cytidine, thymidine, inosine and xanthosine as substrates. Also catalyzes the reverse reactions. The polypeptide is Pyrimidine/purine nucleoside phosphorylase (Aromatoleum aromaticum (strain DSM 19018 / LMG 30748 / EbN1) (Azoarcus sp. (strain EbN1))).